The sequence spans 81 residues: Defensin-like protein 130 (81 aa).

An N-terminal signal peptide occupies residues 1–21; sequence MTKNTSLTIFMVVLVIGMLYT. Intrachain disulfides connect cysteine 32–cysteine 81, cysteine 41–cysteine 63, cysteine 46–cysteine 75, and cysteine 50–cysteine 77.

Belongs to the DEFL family.

Its subcellular location is the secreted. This is Defensin-like protein 130 (LCR28) from Arabidopsis thaliana (Mouse-ear cress).